The following is a 79-amino-acid chain: Small ribosomal subunit protein bS18 (79 aa).

It belongs to the bacterial ribosomal protein bS18 family. As to quaternary structure, part of the 30S ribosomal subunit. Forms a tight heterodimer with protein bS6.

In terms of biological role, binds as a heterodimer with protein bS6 to the central domain of the 16S rRNA, where it helps stabilize the platform of the 30S subunit. This is Small ribosomal subunit protein bS18 from Streptococcus pyogenes serotype M49 (strain NZ131).